Consider the following 250-residue polypeptide: Acidic endochitinase (250 aa).

Glutamine 1 carries the pyrrolidone carboxylic acid modification. The region spanning 1–36 (QNCQCDTTIYCCSQHGYCGNSYDYCGPGCQAGPCWD) is the Chitin-binding type-1 domain. Disulfide bonds link cysteine 3/cysteine 12, cysteine 5/cysteine 18, cysteine 11/cysteine 25, cysteine 29/cysteine 34, cysteine 66/cysteine 115, cysteine 128/cysteine 136, and cysteine 218/cysteine 250. Residue glutamate 110 is the Proton donor of the active site.

The protein belongs to the glycosyl hydrolase 19 family. Chitinase class I subfamily.

It catalyses the reaction Random endo-hydrolysis of N-acetyl-beta-D-glucosaminide (1-&gt;4)-beta-linkages in chitin and chitodextrins.. Defense against chitin-containing fungal pathogens. This Dioscorea japonica (Japanese yam) protein is Acidic endochitinase.